Reading from the N-terminus, the 248-residue chain is MTNSTAEKQQPLTLDISKEALADINDMLEKTTAQQRVAWALNNLPDTHIVSSSFGAQSAVMLHMLTQVQPDIPVVLTDTGYLFPETYKFIDELVEKLNLNLHVYRADMSSAWQEARFGRLWEQGVEGIEKYNKLNKVEPMQRALRELNAGTWFAGLRRSQSDTRGKLPVLQKVGQQFKLYPIIDWSNKDLHYYLKDNELSYHPLWEQGYVSIGDWHTTQSLQEGMSEQDTRFFGLKRECGLHEFGDGI.

Cys239 acts as the Nucleophile; cysteine thiosulfonate intermediate in catalysis.

The protein belongs to the PAPS reductase family. CysH subfamily.

The protein localises to the cytoplasm. It carries out the reaction [thioredoxin]-disulfide + sulfite + adenosine 3',5'-bisphosphate + 2 H(+) = [thioredoxin]-dithiol + 3'-phosphoadenylyl sulfate. The protein operates within sulfur metabolism; hydrogen sulfide biosynthesis; sulfite from sulfate: step 3/3. Its function is as follows. Catalyzes the formation of sulfite from phosphoadenosine 5'-phosphosulfate (PAPS) using thioredoxin as an electron donor. The polypeptide is Phosphoadenosine 5'-phosphosulfate reductase (Alteromonas mediterranea (strain DSM 17117 / CIP 110805 / LMG 28347 / Deep ecotype)).